The primary structure comprises 209 residues: Probable phosphatase C1687.21 (209 aa).

The active-site Tele-phosphohistidine intermediate is the histidine 8. Catalysis depends on glutamate 82, which acts as the Proton donor/acceptor.

The protein belongs to the phosphoglycerate mutase family. BPG-dependent PGAM subfamily.

The protein localises to the cytoplasm. It localises to the nucleus. This is Probable phosphatase C1687.21 from Schizosaccharomyces pombe (strain 972 / ATCC 24843) (Fission yeast).